The following is a 481-amino-acid chain: Probable autolysin LytO (481 aa).

The region spanning Lys7–Arg148 is the Peptidase C51 domain. Residues Thr155–Gln165 show a composition bias toward polar residues. The segment at Thr155 to Lys177 is disordered. One can recognise an N-acetylmuramoyl-L-alanine amidase domain in the interval Ser198 to His323. The SH3b domain maps to Glu398 to Ser466.

It belongs to the N-acetylmuramoyl-L-alanine amidase 2 family.

It catalyses the reaction Hydrolyzes the link between N-acetylmuramoyl residues and L-amino acid residues in certain cell-wall glycopeptides.. In terms of biological role, has weak lytic activity toward S.aureus cells. The chain is Probable autolysin LytO from Staphylococcus aureus (strain NCTC 8325 / PS 47).